A 131-amino-acid polypeptide reads, in one-letter code: Holo-[acyl-carrier-protein] synthase (131 aa).

Asp8 and Glu59 together coordinate Mg(2+).

The protein belongs to the P-Pant transferase superfamily. AcpS family. Mg(2+) is required as a cofactor.

The protein localises to the cytoplasm. The catalysed reaction is apo-[ACP] + CoA = holo-[ACP] + adenosine 3',5'-bisphosphate + H(+). Transfers the 4'-phosphopantetheine moiety from coenzyme A to a Ser of acyl-carrier-protein. The chain is Holo-[acyl-carrier-protein] synthase from Orientia tsutsugamushi (strain Boryong) (Rickettsia tsutsugamushi).